A 255-amino-acid chain; its full sequence is Type III pantothenate kinase (255 aa).

ATP is bound at residue 6–13; the sequence is DVGNTNTV. Substrate-binding positions include tyrosine 100 and 107–110; that span reads GADR. The Proton acceptor role is filled by aspartate 109. Aspartate 129 contributes to the K(+) binding site. Threonine 132 is a binding site for ATP. A substrate-binding site is contributed by threonine 184.

Belongs to the type III pantothenate kinase family. As to quaternary structure, homodimer. Requires NH4(+) as cofactor. K(+) serves as cofactor.

Its subcellular location is the cytoplasm. It catalyses the reaction (R)-pantothenate + ATP = (R)-4'-phosphopantothenate + ADP + H(+). The protein operates within cofactor biosynthesis; coenzyme A biosynthesis; CoA from (R)-pantothenate: step 1/5. In terms of biological role, catalyzes the phosphorylation of pantothenate (Pan), the first step in CoA biosynthesis. This is Type III pantothenate kinase from Acetivibrio thermocellus (strain ATCC 27405 / DSM 1237 / JCM 9322 / NBRC 103400 / NCIMB 10682 / NRRL B-4536 / VPI 7372) (Clostridium thermocellum).